Consider the following 157-residue polypeptide: Mediator of RNA polymerase II transcription subunit 22 (157 aa).

Belongs to the Mediator complex subunit 22 family. In terms of assembly, component of the Mediator complex.

The protein resides in the nucleus. Its function is as follows. Component of the Mediator complex, a coactivator involved in the regulated transcription of nearly all RNA polymerase II-dependent genes. Mediator functions as a bridge to convey information from gene-specific regulatory proteins to the basal RNA polymerase II transcription machinery. Mediator is recruited to promoters by direct interactions with regulatory proteins and serves as a scaffold for the assembly of a functional preinitiation complex with RNA polymerase II and the general transcription factors. The polypeptide is Mediator of RNA polymerase II transcription subunit 22 (mdt-22) (Caenorhabditis elegans).